A 171-amino-acid chain; its full sequence is MAVNNRVKITNDIELKDRLVAINRVTKVTKGGRTFSFSAIVVVGNEDGIIGWGLGKAGEVTAAIAKGVEAAKKNLTRVPVLKGTVPHEQSAKFGGAEVFIKPASTGTGVVAGGAMRAVLESVGVTDVLAKSKGSSNPHNLVKATILALGEMRDARMVAQNRGVSMEKVFRG.

Residues 15-78 (LKDRLVAINR…EAAKKNLTRV (64 aa)) enclose the S5 DRBM domain.

Belongs to the universal ribosomal protein uS5 family. As to quaternary structure, part of the 30S ribosomal subunit. Contacts proteins S4 and S8.

Its function is as follows. With S4 and S12 plays an important role in translational accuracy. In terms of biological role, located at the back of the 30S subunit body where it stabilizes the conformation of the head with respect to the body. The polypeptide is Small ribosomal subunit protein uS5 (Phocaeicola vulgatus (strain ATCC 8482 / DSM 1447 / JCM 5826 / CCUG 4940 / NBRC 14291 / NCTC 11154) (Bacteroides vulgatus)).